The sequence spans 122 residues: Acidic phospholipase A2 BpirPLA2-I (122 aa).

Disulfide bonds link cysteine 26–cysteine 115, cysteine 28–cysteine 44, cysteine 43–cysteine 95, cysteine 49–cysteine 122, cysteine 50–cysteine 88, cysteine 57–cysteine 81, and cysteine 75–cysteine 86. 3 residues coordinate Ca(2+): tyrosine 27, glycine 29, and glycine 31. Histidine 47 is a catalytic residue. A Ca(2+)-binding site is contributed by aspartate 48. Aspartate 89 is an active-site residue. An Antiplatelet activity motif is present at residues 105 to 117 (IKYWFYGAKNCQE).

It belongs to the phospholipase A2 family. Group II subfamily. D49 sub-subfamily. Ca(2+) is required as a cofactor. As to expression, expressed by the venom gland.

The protein localises to the secreted. It catalyses the reaction a 1,2-diacyl-sn-glycero-3-phosphocholine + H2O = a 1-acyl-sn-glycero-3-phosphocholine + a fatty acid + H(+). With respect to regulation, inhibited by EDTA and p-bromophenacyl bromide (BPB). In terms of biological role, snake venom phospholipase A2 (PLA2) that inhibits collagen/ADP-induced platelet aggregation, and induces hypotension in rats (activity abolished in the presence of p-bromophenacyl bromide). PLA2 catalyzes the calcium-dependent hydrolysis of the 2-acyl groups in 3-sn-phosphoglycerides. This is Acidic phospholipase A2 BpirPLA2-I from Bothrops pirajai (Piraja's lancehead).